Reading from the N-terminus, the 150-residue chain is D-aminoacyl-tRNA deacylase (150 aa).

The short motif at 138–139 is the Gly-cisPro motif, important for rejection of L-amino acids element; it reads GP.

Belongs to the DTD family. Homodimer.

The protein resides in the cytoplasm. It catalyses the reaction glycyl-tRNA(Ala) + H2O = tRNA(Ala) + glycine + H(+). The enzyme catalyses a D-aminoacyl-tRNA + H2O = a tRNA + a D-alpha-amino acid + H(+). In terms of biological role, an aminoacyl-tRNA editing enzyme that deacylates mischarged D-aminoacyl-tRNAs. Also deacylates mischarged glycyl-tRNA(Ala), protecting cells against glycine mischarging by AlaRS. Acts via tRNA-based rather than protein-based catalysis; rejects L-amino acids rather than detecting D-amino acids in the active site. By recycling D-aminoacyl-tRNA to D-amino acids and free tRNA molecules, this enzyme counteracts the toxicity associated with the formation of D-aminoacyl-tRNA entities in vivo and helps enforce protein L-homochirality. The polypeptide is D-aminoacyl-tRNA deacylase (Flavobacterium psychrophilum (strain ATCC 49511 / DSM 21280 / CIP 103535 / JIP02/86)).